We begin with the raw amino-acid sequence, 409 residues long: Pentatricopeptide repeat-containing protein At1g31790 (409 aa).

PPR repeat units follow at residues 87-121 (NEDI…SIRP), 122-152 (TITF…MPHR), 153-187 (DFHS…SQKG), 192-226 (PSWI…GFID), 229-259 (DSYL…LSNA), 260-294 (NTVA…GIKK), 295-330 (NVSV…GFES), 331-361 (DCLI…SKDE), and 363-397 (SVSC…GIKA).

It belongs to the PPR family. PCMP-A subfamily.

The chain is Pentatricopeptide repeat-containing protein At1g31790 (PCMP-A1) from Arabidopsis thaliana (Mouse-ear cress).